Here is an 861-residue protein sequence, read N- to C-terminus: Ataxin-7-like protein 1 (861 aa).

Disordered regions lie at residues 1 to 31, 154 to 189, 342 to 448, 606 to 673, and 772 to 861; these read MTSERSRIPCLSAAAAEGTGKKQQEGRAMAT, GHHSASSTSKPFKTPKDNLLTSSSKQHTVFPAKGSR, KSRE…GADE, PIPA…LSGP, and FDKS…RTLP. An SCA7 domain is found at 284–351; it reads RRLSEREFDP…KSREKEVKDK (68 aa). The span at 342-354 shows a compositional bias: basic and acidic residues; that stretch reads KSREKEVKDKEHL. The segment covering 355-369 has biased composition (polar residues); the sequence is LTSTREILPSQSGPA. Low complexity-rich tracts occupy residues 372–381, 403–417, and 606–616; these read SLLGSSGSSG, SSANSISSSTSSNHS, and PIPAVIPSPSH. Over residues 617–627 the composition is skewed to basic residues; it reads KPSKTKTSKSS. The span at 628-641 shows a compositional bias: basic and acidic residues; sequence KVKDLSTRSDESPS. 2 stretches are compositionally biased toward low complexity: residues 648–671 and 783–794; these read QSSTSSSSSSSSSSLQTSLSSPLS and SSSSSKACKITK. Over residues 817–828 the composition is skewed to polar residues; that stretch reads VNSTSSRQVGKN. Positions 829–847 are enriched in low complexity; it reads SSLALSQSSPSSISSPGHS.

The polypeptide is Ataxin-7-like protein 1 (ATXN7L1) (Homo sapiens (Human)).